The chain runs to 153 residues: Ribosome maturation factor RimP (153 aa).

This sequence belongs to the RimP family.

It is found in the cytoplasm. Its function is as follows. Required for maturation of 30S ribosomal subunits. The protein is Ribosome maturation factor RimP of Burkholderia mallei (strain NCTC 10229).